The following is a 1003-amino-acid chain: Methyl-CpG-binding domain protein 6 (1003 aa).

In terms of domain architecture, MBD spans 11 to 81; that stretch reads DRAGGPVATS…KVFNFDPLAP (71 aa). Residues 57–68 form a required for interaction with ASXL1/2/3 region; it reads DGTCKCGLECPL. 3 disordered regions span residues 120 to 219, 238 to 664, and 683 to 1003; these read TCSH…PPPA, VPSD…PLLF, and ATLD…KLAP. Composition is skewed to pro residues over residues 140 to 155 and 268 to 287; these read PGPPSARPPCRVPPTT and TPPPLPPSNNLPAHPGPASQ. 3 stretches are compositionally biased toward low complexity: residues 297-308, 319-328, and 348-361; these read LPLVLGPLGGAP, LASSLLSAAA, and AQAPSASHSSSLRP. Over residues 391-407 the composition is skewed to pro residues; that stretch reads APAPVPQPFSLPEPSQP. Over residues 408-426 the composition is skewed to low complexity; it reads ILPSVLSLLGLPTPGPSHS. Residues 439–456 are compositionally biased toward pro residues; sequence LPPPPTLSSGSPPQPRHP. Composition is skewed to low complexity over residues 460-498 and 531-548; these read SLPGTTSGSLSSVPGAPAPPAASKAPVVPSPVLQSPSEG and GAGFPGMLGALPLPLSLG. Residues 570-589 show a composition bias toward pro residues; the sequence is QPPPEPLLPPPGGPGPPLAP. Positions 590 to 602 are enriched in low complexity; it reads GEPEGPSLLVASL. Over residues 603–617 the composition is skewed to pro residues; the sequence is LPPPPSDLLPPPSAP. The span at 618-633 shows a compositional bias: low complexity; it reads PSNLLASFLPLLALGP. Residues 635–649 show a composition bias toward gly residues; sequence AGDGEGSAEGAGGPS. The span at 650-662 shows a compositional bias: low complexity; it reads GEPFSGLGDLSPL. Residues 707–718 are compositionally biased toward polar residues; that stretch reads TSSVTTATTDPG. 3 stretches are compositionally biased toward low complexity: residues 732–761, 768–778, and 788–798; these read PPQLLSPLLGASLLGDLSSLTSSPGALPSL, LLSGQLGLQLL, and SEASSPLACLL. Positions 805 to 817 are enriched in pro residues; it reads PEQPEAPCLPPES. Residues 818-837 show a composition bias toward low complexity; the sequence is PASALEPEPARPPLSALAPP. Over residues 947 to 958 the composition is skewed to basic residues; it reads RKSRRGRRRKYN. A compositionally biased stretch (polar residues) spans 959 to 969; it reads PTRNSNSSRQD. Residues 989 to 1003 show a composition bias toward basic residues; the sequence is RPGRPAKNKRRKLAP.

In terms of assembly, core component of the polycomb repressive deubiquitinase (PR-DUB) complex, at least composed of BAP1, one of ASXL1, ASXL2 or (probably) ASXL3, and one of MBD5 or MBD6. Distinct combinations of ASXL and MBD proteins may preferentially bind specific histone modification marks. The PR-DUB core associates with a number of accessory proteins, including FOXK1, FOXK2, KDM1B, HCFC1 and OGT; KDM1B specifically associates with ASXL2 PR-DUB complexes. Interacts (via MBD domain) with ASXL1, ASXL2 and ASXL3 (via PHD domain); the interaction is probably direct, mediates association with other PR-DUB complex core components.

It localises to the nucleus. The protein resides in the chromosome. In terms of biological role, non-catalytic component of the polycomb repressive deubiquitinase (PR-DUB) complex, a complex that specifically mediates deubiquitination of histone H2A monoubiquitinated at 'Lys-120' (H2AK119ub1). Important for stability of PR-DUB components and stimulating its ubiquitinase activity. As part of the PR-DUB complex, associates with chromatin enriched in histone marks H3K4me1, H3K4me3, and H3K27Ac, but not in H3K27me3. MBD5 and MBD6 containing complexes associate with distinct chromatin regions enriched in genes involved in different pathways. Heterochromatin recruitment is not mediated by DNA methylation. The PR-DUB complex is an epigenetic regulator of gene expression, including genes involved in development, cell communication, signaling, cell proliferation and cell viability; may promote cancer cell growth. The sequence is that of Methyl-CpG-binding domain protein 6 (MBD6) from Homo sapiens (Human).